The sequence spans 416 residues: MYMDAFGWSAPAAPCQPSCGPGGDDDDDVLLAAVLGASFELHSLVDGGGNGAAGAVRSDDAYGLDVDLPSHQMSLLRCQDGLSALHGDASPTAAAAAFLDSVDVLPVPAIAGATHDDGGLLDRFAFPNVAETTTVQAAASNTAFSGYSSNTTGGGNISSGESNTYTEVASTPCAVSTTTTTTALPPSKRKLPEKYPVVGTSPTTKTTTTSETAAERRSTKRGAGGSSSITFGGGCHGAGAAAALLGYGRGYEPDTEAIAQVKEMIYRAAAMRPVTLGGPASASDPSSRPPPPPQRPRRKNVRISSDPQTVAARLRRERVSERLRVLQRLVPGGSKMDTATMLDEAASYLKFLKSQLEALETLGNGNGNGNLLHHGYYTGSRNATATAATGSSNSTVLAFGRDGLAGFVKSNRNLQL.

Low complexity-rich tracts occupy residues 176–186 (STTTTTTALPP) and 200–212 (TSPTTKTTTTSET). Disordered stretches follow at residues 176-226 (STTT…AGGS) and 276-311 (LGGPASASDPSSRPPPPPQRPRRKNVRISSDPQTVA). Residues 303 to 316 (ISSDPQTVAARLRR) form a basic motif; degenerate region. In terms of domain architecture, bHLH spans 303–352 (ISSDPQTVAARLRRERVSERLRVLQRLVPGGSKMDTATMLDEAASYLKFL). A helix-loop-helix motif region spans residues 317-352 (ERVSERLRVLQRLVPGGSKMDTATMLDEAASYLKFL).

This sequence belongs to the bHLH protein family. Interacts with PIL13 and PIL15.

The protein localises to the nucleus. Its function is as follows. Transcription factor involved in the negative regulation of flowering. May be involved in the repression of the flowering factor GI and HD1 by interacting with PIL13 and PIL15 and competing with PRR1. Possesses transactivation activity in yeast. The chain is Transcription factor LATE FLOWERING from Oryza sativa subsp. japonica (Rice).